A 488-amino-acid chain; its full sequence is MTSTVLVDIRDEVTCPICLELLTEPLSIDCGHSFCQVCIIGNSNNSVFGQGGRSSCPVCRTSYQPGNLRPNRHLAAIVKRLREVALCPGKQLEVIFCALHGEKLQLFCKEDGKLICWLCERSQEHRGHHTFLMEEVAQEYQDMFQESLKKLRREQQEAEKLKALIQEKRESWKSQVEPEKRRIQTEFKQLRSILDREEQRELKKLEVEERKGLSIIEKAEGDLIHQSQSLKDLISDLEHRCQGSTVELLQDVGDVTKRSEFWTLRKPQALPTKLKSLFRAPDLRKMLKVFRELTDVQSYWVDVTLNPQTANLNLVLSKNRRQVRFVGAQLSEPSSLEEHYDCSVLGSQHFSSGKYYWEVDVSKKTAWILGVCSTPVDPMFSFSQYSSKQGAYSRYQPQCGYWVIGLQCKHEYRAYEDSSPSLLLSMTVPPRRIGIFLDCEAGTVSFYNVTNHGLPIYTFSKYYFPSALCPYFNPCSCIVPMTLRRPTS.

The segment at 15 to 60 adopts an RING-type zinc-finger fold; that stretch reads CPICLELLTEPLSIDCGHSFCQVCIIGNSNNSVFGQGGRSSCPVCR. The segment at 92–133 adopts a B box-type zinc-finger fold; the sequence is LEVIFCALHGEKLQLFCKEDGKLICWLCERSQEHRGHHTFLM. The Zn(2+) site is built by cysteine 97, histidine 100, cysteine 119, and histidine 125. A coiled-coil region spans residues 132–223; the sequence is LMEEVAQEYQ…SIIEKAEGDL (92 aa). Positions 282–488 constitute a B30.2/SPRY domain; sequence DLRKMLKVFR…VPMTLRRPTS (207 aa).

Belongs to the TRIM/RBCC family. Homotrimer. Forms heteromultimers (via B30.2/SPRY domain) with TRIM5. Interacts with MYC. Interacts (via SPRY domain) with IKBKE. Interacts with VAMP8; this interaction contributes to the activation of the type I interferon antiviral response. Interacts with DHX16.

The protein resides in the cytoplasm. It carries out the reaction S-ubiquitinyl-[E2 ubiquitin-conjugating enzyme]-L-cysteine + [acceptor protein]-L-lysine = [E2 ubiquitin-conjugating enzyme]-L-cysteine + N(6)-ubiquitinyl-[acceptor protein]-L-lysine.. Its pathway is protein modification; protein ubiquitination. E3 ubiquitin ligase that plays a crucial role in the activation of the IKBKE-dependent branch of the type I interferon signaling pathway. In concert with the ubiquitin-conjugating E2 enzyme UBE2K, synthesizes unanchored 'Lys-48'-linked polyubiquitin chains that promote the oligomerization and autophosphorylation of IKBKE leading to stimulation of an antiviral response. Also ubiquitinates MYC and inhibits its transcription activation activity, maintaining the pluripotency of embryonic stem cells. Promotes the association of unanchored 'Lys-48'-polyubiquitin chains with DHX16 leading to enhancement of RIGI-mediated innate antiviral immune response. This Mus musculus (Mouse) protein is Tripartite motif-containing protein 6 (Trim6).